A 91-amino-acid chain; its full sequence is Mercuric transport protein periplasmic component (91 aa).

The N-terminal stretch at methionine 1–alanine 19 is a signal peptide. One can recognise an HMA domain in the interval glutamine 22–serine 88. Cysteine 33 and cysteine 36 together coordinate Hg(2+).

It belongs to the MerP family. Monomer.

It localises to the periplasm. Functionally, involved in mercury resistance. Acts as a mercury scavenger that specifically binds to a mercuric ion in the periplasm and probably passes it to the cytoplasmic mercuric reductase MerA via the mercuric transport protein MerT. This is Mercuric transport protein periplasmic component from Acinetobacter calcoaceticus.